A 274-amino-acid polypeptide reads, in one-letter code: Putative pyruvate, phosphate dikinase regulatory protein (274 aa).

ADP is bound at residue 153–160; that stretch reads GISRTSKT.

It belongs to the pyruvate, phosphate/water dikinase regulatory protein family. PDRP subfamily.

It carries out the reaction N(tele)-phospho-L-histidyl/L-threonyl-[pyruvate, phosphate dikinase] + ADP = N(tele)-phospho-L-histidyl/O-phospho-L-threonyl-[pyruvate, phosphate dikinase] + AMP + H(+). The catalysed reaction is N(tele)-phospho-L-histidyl/O-phospho-L-threonyl-[pyruvate, phosphate dikinase] + phosphate + H(+) = N(tele)-phospho-L-histidyl/L-threonyl-[pyruvate, phosphate dikinase] + diphosphate. Bifunctional serine/threonine kinase and phosphorylase involved in the regulation of the pyruvate, phosphate dikinase (PPDK) by catalyzing its phosphorylation/dephosphorylation. This is Putative pyruvate, phosphate dikinase regulatory protein from Bartonella henselae (strain ATCC 49882 / DSM 28221 / CCUG 30454 / Houston 1) (Rochalimaea henselae).